A 406-amino-acid chain; its full sequence is ATP synthase subunit a (406 aa).

Low complexity-rich tracts occupy residues 22 to 31 (AGEHGAPAPE) and 43 to 59 (DAAG…AEHG). Residues 22–76 (AGEHGAPAPEVATPAEGHGARDAAGAATDPHGAAAEHGAAAHEDPAQHGAAGAEA) are disordered. Helical transmembrane passes span 151-171 (KHVV…FAAV), 209-229 (FVPY…FGLV), 232-252 (AATA…TFLI), 278-298 (LWPL…TKPF), 304-324 (LFAN…LIFA), and 351-371 (VQAY…VAHH). A disordered region spans residues 375-406 (DEHEEHGHGAAATGGAHGSHGSHVAGASPGHG). Residues 383-406 (GAAATGGAHGSHGSHVAGASPGHG) show a composition bias toward low complexity.

Belongs to the ATPase A chain family. In terms of assembly, F-type ATPases have 2 components, CF(1) - the catalytic core - and CF(0) - the membrane proton channel. CF(1) has five subunits: alpha(3), beta(3), gamma(1), delta(1), epsilon(1). CF(0) has three main subunits: a(1), b(2) and c(9-12). The alpha and beta chains form an alternating ring which encloses part of the gamma chain. CF(1) is attached to CF(0) by a central stalk formed by the gamma and epsilon chains, while a peripheral stalk is formed by the delta and b chains.

The protein resides in the cell inner membrane. In terms of biological role, key component of the proton channel; it plays a direct role in the translocation of protons across the membrane. This chain is ATP synthase subunit a, found in Anaeromyxobacter sp. (strain Fw109-5).